The chain runs to 191 residues: Prostaglandin-H2 D-isomerase (191 aa).

The N-terminal stretch at 1–28 is a signal peptide; that stretch reads MATPNRLWMALLLLGVLGVLQTPAPAQA. An N-linked (GlcNAc...) asparagine glycan is attached at Asn-51. Cys-65 (nucleophile) is an active-site residue. A glycan (N-linked (GlcNAc...) asparagine) is linked at Asn-78. A disulfide bond links Cys-89 and Cys-186.

This sequence belongs to the calycin superfamily. Lipocalin family. As to quaternary structure, monomer. In terms of tissue distribution, in the male reproductive system, expressed in the testis, epididymis and prostate, and secreted into the seminal fluid.

It is found in the rough endoplasmic reticulum. It localises to the nucleus membrane. Its subcellular location is the golgi apparatus. The protein resides in the cytoplasm. The protein localises to the perinuclear region. It is found in the secreted. The enzyme catalyses prostaglandin H2 = prostaglandin D2. In terms of biological role, catalyzes the conversion of PGH2 to PGD2, a prostaglandin involved in smooth muscle contraction/relaxation and a potent inhibitor of platelet aggregation. Involved in a variety of CNS functions, such as sedation, NREM sleep and PGE2-induced allodynia, and may have an anti-apoptotic role in oligodendrocytes. Binds small non-substrate lipophilic molecules, including biliverdin, bilirubin, retinal, retinoic acid and thyroid hormone, and may act as a scavenger for harmful hydrophobic molecules and as a secretory retinoid and thyroid hormone transporter. Possibly involved in development and maintenance of the blood-brain, blood-retina, blood-aqueous humor and blood-testis barrier. It is likely to play important roles in both maturation and maintenance of the central nervous system and male reproductive system. Involved in PLA2G3-dependent maturation of mast cells. PLA2G3 is secreted by immature mast cells and acts on nearby fibroblasts upstream to PTDGS to synthesize PGD2, which in turn promotes mast cell maturation and degranulation via PTGDR. The polypeptide is Prostaglandin-H2 D-isomerase (PTGDS) (Bos taurus (Bovine)).